The chain runs to 352 residues: MNGTEGPFFYIPMVNTTGIVRSPYEYPQYYLVNPAAYAALGAYMFFLILTGFPINFLTLYVTLEHKKLRTALNLILLNLAVADLFMVFGGFTTTMYTSMHGYFVLGRLGCNVEGFFATLGGEIALWSLVVLAVERWVVVCKPISNFRFTENHAIMGVAFSWIMAATCAVPPLVGWSRYIPEGMQCSCGVDYYTRAEGFNNESFVIYMFIVHFLAPLIVIFFCYGRLLCAVKEAAAAQQESETTQRAEREVTRMVIIMVIGFLTSWLPYASVAWYIFTHQGTEFGPLFMTIPAFFAKSSALYNPMIYICMNKQFRHCMITTLCCGKNPFEEEEGASTTKTEASSVSSSSVSPA.

The Extracellular portion of the chain corresponds to 1-36 (MNGTEGPFFYIPMVNTTGIVRSPYEYPQYYLVNPAA). N-linked (GlcNAc...) asparagine glycans are attached at residues asparagine 2 and asparagine 15. Residues 37 to 61 (YAALGAYMFFLILTGFPINFLTLYV) traverse the membrane as a helical segment. Over 62–73 (TLEHKKLRTALN) the chain is Cytoplasmic. The helical transmembrane segment at 74-96 (LILLNLAVADLFMVFGGFTTTMY) threads the bilayer. At 97-110 (TSMHGYFVLGRLGC) the chain is on the extracellular side. The cysteines at positions 110 and 187 are disulfide-linked. Residues 111-133 (NVEGFFATLGGEIALWSLVVLAV) form a helical membrane-spanning segment. The 'Ionic lock' involved in activated form stabilization signature appears at 134-136 (ERW). The Cytoplasmic portion of the chain corresponds to 134-152 (ERWVVVCKPISNFRFTENH). The helical transmembrane segment at 153–173 (AIMGVAFSWIMAATCAVPPLV) threads the bilayer. The Extracellular portion of the chain corresponds to 174-202 (GWSRYIPEGMQCSCGVDYYTRAEGFNNES). A helical membrane pass occupies residues 203 to 224 (FVIYMFIVHFLAPLIVIFFCYG). The Cytoplasmic portion of the chain corresponds to 225–252 (RLLCAVKEAAAAQQESETTQRAEREVTR). The helical transmembrane segment at 253–274 (MVIIMVIGFLTSWLPYASVAWY) threads the bilayer. Residues 275–286 (IFTHQGTEFGPL) lie on the Extracellular side of the membrane. A helical transmembrane segment spans residues 287–308 (FMTIPAFFAKSSALYNPMIYIC). Lysine 296 carries the post-translational modification N6-(retinylidene)lysine. The Cytoplasmic portion of the chain corresponds to 309 to 352 (MNKQFRHCMITTLCCGKNPFEEEEGASTTKTEASSVSSSSVSPA). S-palmitoyl cysteine attachment occurs at residues cysteine 322 and cysteine 323. The segment at 331-352 (EEGASTTKTEASSVSSSSVSPA) is disordered. Residues 342 to 352 (SSVSSSSVSPA) show a composition bias toward low complexity.

It belongs to the G-protein coupled receptor 1 family. Opsin subfamily. Phosphorylated on some or all of the serine and threonine residues present in the C-terminal region. In terms of processing, contains one covalently linked retinal chromophore.

Its subcellular location is the membrane. It is found in the cell projection. It localises to the cilium. The protein localises to the photoreceptor outer segment. In terms of biological role, photoreceptor required for image-forming vision at low light intensity. While most salt water fish species use retinal as chromophore, most freshwater fish use 3-dehydroretinal, or a mixture of retinal and 3-dehydroretinal. Light-induced isomerization of 11-cis to all-trans retinal triggers a conformational change that activates signaling via G-proteins. Subsequent receptor phosphorylation mediates displacement of the bound G-protein alpha subunit by arrestin and terminates signaling. The protein is Rhodopsin (rho) of Pomatoschistus minutus (Sand goby).